The sequence spans 438 residues: Probable exopolygalacturonase B (438 aa).

An N-terminal signal peptide occupies residues 1–15 (MYLLPLTLFLTAAFG). 3 N-linked (GlcNAc...) asparagine glycosylation sites follow: N118, N185, and N225. A PbH1 1 repeat occupies 209–248 (TNDVSFDNVYIHAFSTNASSDPANTDGMDSLDVDGVSFTN). Catalysis depends on D255, which acts as the Proton donor. Cysteines 257 and 274 form a disulfide. N263 and N275 each carry an N-linked (GlcNAc...) asparagine glycan. Residue H278 is part of the active site. 2 PbH1 repeats span residues 295–316 (IENV…RLKA) and 327–348 (INNV…VLDQ). Residues N302, N329, N354, and N366 are each glycosylated (N-linked (GlcNAc...) asparagine). The cysteines at positions 392 and 398 are disulfide-linked. The stretch at 398 to 430 (CTNITLSNVNLTSPKGTAEIVCDDIQGGIGVDC) is one PbH1 4 repeat. 2 N-linked (GlcNAc...) asparagine glycosylation sites follow: N400 and N407.

This sequence belongs to the glycosyl hydrolase 28 family.

It localises to the secreted. It catalyses the reaction [(1-&gt;4)-alpha-D-galacturonosyl](n) + H2O = alpha-D-galacturonate + [(1-&gt;4)-alpha-D-galacturonosyl](n-1). Functionally, specific in hydrolyzing the terminal glycosidic bond of polygalacturonic acid and oligogalacturonates. This chain is Probable exopolygalacturonase B (pgxB), found in Aspergillus niger (strain ATCC MYA-4892 / CBS 513.88 / FGSC A1513).